The primary structure comprises 128 residues: UPF0102 protein Rfer_3873 (128 aa).

A compositionally biased stretch (polar residues) spans 1 to 15 (MAIPQIKTQVGTSKQ). Positions 1–20 (MAIPQIKTQVGTSKQAGDAA) are disordered.

Belongs to the UPF0102 family.

The sequence is that of UPF0102 protein Rfer_3873 from Albidiferax ferrireducens (strain ATCC BAA-621 / DSM 15236 / T118) (Rhodoferax ferrireducens).